Consider the following 1036-residue polypeptide: Protein smoothened (1036 aa).

A signal peptide spans 1–31 (MQYLNFPRMPNIMMFLEVAILCLWVVADASA). Residues 32-258 (SSAKFGSTTP…DDEHRQIHKL (227 aa)) lie on the Extracellular side of the membrane. Asn-55 and Asn-95 each carry an N-linked (GlcNAc...) asparagine glycan. The FZ domain occupies 85-206 (VRRARCYPTS…TLFPTKCTNG (122 aa)). Intrachain disulfides connect Cys-90–Cys-155, Cys-100–Cys-148, Cys-139–Cys-179, and Cys-172–Cys-194. Residues Asn-184, Asn-195, and Asn-213 are each glycosylated (N-linked (GlcNAc...) asparagine). 2 cysteine pairs are disulfide-bonded: Cys-218–Cys-238 and Cys-242–Cys-320. Residues 259 to 279 (IGWAGSICLLSNLFVVSTFFI) traverse the membrane as a helical segment. The Cytoplasmic portion of the chain corresponds to 280-287 (DWKNANKY). The chain crosses the membrane as a helical span at residues 288 to 308 (PAVIVFYINLCFLIACVGWLL). The Extracellular portion of the chain corresponds to 309–339 (QFTSGSREDIVCRKDGTLRHSEPTAGENLSC). Asn-336 is a glycosylation site (N-linked (GlcNAc...) asparagine). The cysteines at positions 339 and 413 are disulfide-linked. A helical transmembrane segment spans residues 340–360 (IVIFVLVYYFLTAGMVWFVFL). Residues 361 to 381 (TYAWHWRAMGHVQDRIDKKGS) lie on the Cytoplasmic side of the membrane. A helical transmembrane segment spans residues 382 to 402 (YFHLVAWSLPLVLTITTMAFS). Residues 403–421 (EVDGNSIVGICFVGYINHS) lie on the Extracellular side of the membrane. A glycan (N-linked (GlcNAc...) asparagine) is linked at Asn-419. Residues 422 to 442 (MRAGLLLGPLCGVILIGGYFI) traverse the membrane as a helical segment. At 443–469 (TRGMVMLFGLKHFANDIKSTSASNKIH) the chain is on the cytoplasmic side. The helical transmembrane segment at 470–490 (LIIMRMGVCALLTLVFILVAI) threads the bilayer. The Extracellular segment spans residues 491–532 (ACHVTEFRHADEWAQSFRQFIICKISSVFEEKSSCRIENRPS). Cys-513 and Cys-525 form a disulfide bridge. A helical membrane pass occupies residues 533–553 (VGVLQLHLLCLFSSGIVMSTW). Residues 554 to 1036 (CWTPSSIETW…KLKMLLLPSK (483 aa)) lie on the Cytoplasmic side of the membrane. Residues Ser-658, Ser-659, Ser-667, Ser-670, Ser-673, Ser-687, Ser-690, and Ser-693 each carry the phosphoserine modification. Disordered regions lie at residues 678-745 (HVSV…TSVE) and 870-902 (IKKS…KNPA). The segment covering 880–899 (RHSRNSARSQSKKSQKRHLK) has biased composition (basic residues).

This sequence belongs to the G-protein coupled receptor Fz/Smo family. Interacts with cos. Post-translationally, phosphorylation by CkIalpha and PKA regulates smo accumulation at the cell surface and its signaling activity in response to hh. Expressed in olfactory sensory neurons (at protein level).

The protein localises to the cell membrane. It is found in the cell projection. It localises to the cilium. Its function is as follows. Segment polarity protein required for correct patterning of every segment. G protein-coupled receptor which associates with the patched protein (ptc) to transduce the hedgehog (hh) signal through the activation of an inhibitory G-protein. In the absence of hh, ptc represses the constitutive signaling activity of smo through fused (fu). Essential component of a hh-signaling pathway which regulates the Duox-dependent gut immune response to bacterial uracil; required to activate Cad99C-dependent endosome formation, norpA-dependent Ca2+ mobilization and p38 MAPK, which are essential steps in the Duox-dependent production of reactive oxygen species (ROS) in response to intestinal bacterial infection. This chain is Protein smoothened (smo), found in Drosophila melanogaster (Fruit fly).